Consider the following 977-residue polypeptide: SGGFDFSFLPQPPQEKGPMGLMGPRGPPGASGAPGPQGFQGPAGEPGEPGQTGPAGARGPAGPPGKAGERGVVGPQGARGFPGTPGLPGFKGIRGHNGLDGLKGEPGAPGENGTPGQTGARGLPGERGRVGAPGPAGSRGSDGSVGPVGPAGPIGSAGPPGFPGAPGPKGELGPVGNTGPSGPAGPRGEQGLPGVSGPVGPPGNPGANGLTGAKGAAGLPGVAGAPGLPGPRGIPGPVSGATGARGLVGEPGPAGSKGESGGKGEPGSAGPQGPPGSSGEEGKRGPSGESGSTGPTGPPGLRGGPGSRGLPGADGRAGVIGPAGARGASGPAGVRGPSGDTGRPGEPGLMGARGLPGSPGNVGPAGKEGPAGLPGIDGRPGPIGPAGARGEAGNIGFPGPKGPAGDPGKAGEKGHAGLAGNRGAPGPDGNNGAQGPPGLQGVQGGKGEQGPAGPPGFQGLPGPAGTTGEAGKPGERGIPGEFGLPGPAGPRGERGPSGESGAVGPSGAIGSRGPSGPPGPDGNKGEPGVVGAPGTAGPAGSGGLPGERGAAGIPGGKGEKGETGLRGEVGTTGRDGARGAPGAVGAPGPAGATGDRGEAGAAGPAGPAGPRGGPGERGEVGPAGPNGFAGPAGAAGQPGAKGERGTKGPKGELGIVGPTGPVGSAGPAGPNGPAGPAGSRGDGGPPGLTGFPGAAGRTGPPGPSGITGPPGPPGAAGKEGLRGPRGDQGPVGRTGETGAGGPPGFTGEKGPSGEPGTAGPPGTAGPQGLLGAPGILGLPGSRGERGLPGVAGAVGEPGPLGIGPPGARGPSGAGVNGAPGEAGRDGNPGSDGPPGRDGLPGHKGERGAGNPGPVGAAGAPGPHGAVGPAGKHGNRGEPGPAGSVGPVGAVGPRGPSGPQGIRGDKGEAGDKGPRGLQGLPGLAGQHGDQGAPGPVGPAGPRGPAGPSGPPGKDGRTGHPGAVGPAGIRGSQGSQGPS.

The interval 1–977 (SGGFDFSFLP…RGSQGSQGPS (977 aa)) is disordered. 4-hydroxyproline occurs at positions 10, 13, 28, and 34. Low complexity predominate over residues 17–66 (GPMGLMGPRGPPGASGAPGPQGFQGPAGEPGEPGQTGPAGARGPAGPPGK). Lys-91 carries the post-translational modification 5-hydroxylysine; alternate. An O-linked (Gal...) hydroxylysine; alternate glycan is attached at Lys-91. Composition is skewed to low complexity over residues 138-159 (SRGS…SAGP) and 205-226 (PGAN…AGAP). Positions 258–267 (GESGGKGEPG) are enriched in gly residues. Residues 268-278 (SAGPQGPPGSS) show a composition bias toward low complexity. Positions 300–309 (GLRGGPGSRG) are enriched in gly residues. Low complexity predominate over residues 322–338 (PAGARGASGPAGVRGPS). 4-hydroxyproline is present on residues Pro-344 and Pro-347. Over residues 373–392 (LPGIDGRPGPIGPAGARGEA) the composition is skewed to low complexity. The span at 441–450 (GVQGGKGEQG) shows a compositional bias: gly residues. 2 stretches are compositionally biased toward low complexity: residues 497 to 514 (SGES…SRGP) and 526 to 536 (EPGVVGAPGTA). Residues 537–546 (GPAGSGGLPG) are compositionally biased toward gly residues. Composition is skewed to low complexity over residues 569 to 605 (VGTT…AGPA) and 620 to 640 (VGPA…QPGA). Basic and acidic residues predominate over residues 641–650 (KGERGTKGPK). Residues 658–668 (PTGPVGSAGPA) show a composition bias toward low complexity. Residues 678-687 (GSRGDGGPPG) are compositionally biased toward gly residues. The span at 689 to 698 (TGFPGAAGRT) shows a compositional bias: low complexity. Residues 735 to 744 (GETGAGGPPG) show a composition bias toward gly residues. 2 stretches are compositionally biased toward low complexity: residues 752–779 (SGEP…LGLP) and 787–797 (LPGVAGAVGEP). The span at 798–817 (GPLGIGPPGARGPSGAGVNG) shows a compositional bias: gly residues. Composition is skewed to low complexity over residues 853-871 (PVGA…PAGK) and 878-898 (PGPA…PSGP). Basic and acidic residues predominate over residues 902 to 913 (RGDKGEAGDKGP).

Belongs to the fibrillar collagen family. Trimers of one alpha 2(I) and two alpha 1(I) chains. Interacts (via C-terminus) with TMEM131 (via PapD-L domain); the interaction is direct and is involved in assembly and TRAPPIII ER-to-Golgi transport complex-dependent secretion of collagen. Prolines at the third position of the tripeptide repeating unit (G-X-Y) are hydroxylated in some or all of the chains. Expressed in bones.

It localises to the secreted. The protein resides in the extracellular space. Its subcellular location is the extracellular matrix. Its function is as follows. Type I collagen is a member of group I collagen (fibrillar forming collagen). This chain is Collagen alpha-2(I) chain, found in Scelidodon sp. (strain SLP-2019) (South American ground sloth).